The sequence spans 89 residues: Class II hydrophobin 2 (89 aa).

The first 15 residues, 1 to 15 (MKLYIAAALLTLGLA), serve as a signal peptide directing secretion. 4 cysteine pairs are disulfide-bonded: Cys-34–Cys-74, Cys-45–Cys-66, Cys-46–Cys-58, and Cys-75–Cys-86.

Belongs to the cerato-ulmin hydrophobin family. In terms of assembly, homodimer. Homodimers further self-assemble to form highly ordered films at water-air interfaces through intermolecular interactions.

It is found in the secreted. Its subcellular location is the cell wall. Functionally, aerial growth, conidiation, and dispersal of filamentous fungi in the environment rely upon a capability of their secreting small amphipathic proteins called hydrophobins (HPBs) with low sequence identity. Class I can self-assemble into an outermost layer of rodlet bundles on aerial cell surfaces, conferring cellular hydrophobicity that supports fungal growth, development and dispersal; whereas Class II form highly ordered films at water-air interfaces through intermolecular interactions but contribute nothing to the rodlet structure. This chain is Class II hydrophobin 2, found in Trichoderma asperellum (strain ATCC 204424 / CBS 433.97 / NBRC 101777).